Consider the following 276-residue polypeptide: Probable endonuclease 4 (276 aa).

Residues His-66, His-106, Glu-141, Asp-175, His-178, His-210, Asp-223, His-225, and Glu-255 each coordinate Zn(2+).

The protein belongs to the AP endonuclease 2 family. Requires Zn(2+) as cofactor.

The enzyme catalyses Endonucleolytic cleavage to 5'-phosphooligonucleotide end-products.. Its function is as follows. Endonuclease IV plays a role in DNA repair. It cleaves phosphodiester bonds at apurinic or apyrimidinic (AP) sites, generating a 3'-hydroxyl group and a 5'-terminal sugar phosphate. The polypeptide is Probable endonuclease 4 (Heliobacterium modesticaldum (strain ATCC 51547 / Ice1)).